The chain runs to 762 residues: 5-methyltetrahydropteroyltriglutamate--homocysteine methyltransferase (762 aa).

5-methyltetrahydropteroyltri-L-glutamate contacts are provided by residues 17-20 and lysine 111; that span reads REWK. L-homocysteine is bound by residues 435–437 and glutamate 488; that span reads IGS. L-methionine-binding positions include 435-437 and glutamate 488; that span reads IGS. 5-methyltetrahydropteroyltri-L-glutamate-binding positions include 519–520 and tryptophan 565; that span reads RC. Aspartate 603 is a binding site for L-homocysteine. Aspartate 603 is a binding site for L-methionine. Residue glutamate 609 coordinates 5-methyltetrahydropteroyltri-L-glutamate. Histidine 645, cysteine 647, and glutamate 669 together coordinate Zn(2+). Histidine 698 functions as the Proton donor in the catalytic mechanism. Zn(2+) is bound at residue cysteine 730.

It belongs to the vitamin-B12 independent methionine synthase family. Zn(2+) serves as cofactor.

It carries out the reaction 5-methyltetrahydropteroyltri-L-glutamate + L-homocysteine = tetrahydropteroyltri-L-glutamate + L-methionine. The protein operates within amino-acid biosynthesis; L-methionine biosynthesis via de novo pathway; L-methionine from L-homocysteine (MetE route): step 1/1. In terms of biological role, catalyzes the transfer of a methyl group from 5-methyltetrahydrofolate to homocysteine resulting in methionine formation. The sequence is that of 5-methyltetrahydropteroyltriglutamate--homocysteine methyltransferase from Bacillus thuringiensis subsp. konkukian (strain 97-27).